A 271-amino-acid chain; its full sequence is Shikimate kinase (271 aa).

83–93 (PIAMGLKSSSA) lines the ATP pocket.

This sequence belongs to the GHMP kinase family. Archaeal shikimate kinase subfamily.

It localises to the cytoplasm. It catalyses the reaction shikimate + ATP = 3-phosphoshikimate + ADP + H(+). Its pathway is metabolic intermediate biosynthesis; chorismate biosynthesis; chorismate from D-erythrose 4-phosphate and phosphoenolpyruvate: step 5/7. The sequence is that of Shikimate kinase from Thermococcus kodakarensis (strain ATCC BAA-918 / JCM 12380 / KOD1) (Pyrococcus kodakaraensis (strain KOD1)).